Consider the following 425-residue polypeptide: Terminal nucleotidyltransferase 5B (425 aa).

The segment at 1–42 is disordered; sequence MMPSESGAERRDRAAAQVGTAAATAVATAAPAGGGPDPEALS. The segment covering 15-31 has biased composition (low complexity); sequence AAQVGTAAATAVATAAP.

The protein belongs to the TENT family.

It is found in the cytoplasm. It localises to the nucleus. The enzyme catalyses RNA(n) + ATP = RNA(n)-3'-adenine ribonucleotide + diphosphate. In terms of biological role, catalyzes the transfer of one adenosine molecule from an ATP to an mRNA poly(A) tail bearing a 3'-OH terminal group in an ATP hydrolysis-dependent manner. May be involved in maintaining the translation efficiency of at least some genes through preventing degradation of their mRNAs. Prefers RNA molecules that are adenosine-rich close to 3'-end. In addition, may inhibit cell proliferation and cell cycle progression through ubiquitination of beta-catenin/CTNNB1. In Homo sapiens (Human), this protein is Terminal nucleotidyltransferase 5B.